The following is an 858-amino-acid chain: Transcription factor pytR (858 aa).

Residues 1–35 (MAHFSRVASDPSLAPQPSAPSGLDSSTTSSSSTGL) form a disordered region. Residues 39 to 65 (CTFCRARKIRCSSGPICSACRERNINC) constitute a DNA-binding region (zn(2)-C6 fungal-type). The segment at 72–99 (RKGRPRRRGTNTSNAQAKKGDQENPTLG) is disordered.

Its subcellular location is the nucleus. Functionally, transcription factor that regulates the expression of the gene cluster that mediates the biosynthesis of Pyranterreones, a family of antioxidative compounds. This chain is Transcription factor pytR, found in Aspergillus terreus (strain NIH 2624 / FGSC A1156).